Reading from the N-terminus, the 473-residue chain is MNLQGRTVLVLGLGETGLSMAKWLFRRGALVRAADTRNEPPAMRAFNSLLPQAEVFTGSLAGRAFYGVDLIAISPGLPLSEPLVQQALKEGIPVVGDMELFACAVGGTGGGMPKLVGITGSNGKTTVTAMTGAMLKKAGWDVEVAGNIGPAVLDALMRREDTGKMPQAWVLELSSFQLETTKSLGLDAAAVLNVSEDHLDRYAGMQEYAAAKARIFLGDSEGVQILNGDDPVVRQMTLAGRPHVTFSLATPQSADDFGLLREGGDTWLMQGDTRLMDARELAITGRHNCANALAALALCRALAVPFEPLLQALREFRGLPHRVEKVAAFSGITFYDDSKGTNVGATVAALKGLGQPVVLIAGGDGKAQNFSPLAAPIGEHGRAVVLIGRDAEKIAVAINECGVPLHRAQTMEEAVRKSFQLAREGDAVLMSPACASFDMFDNYVHRAEAFVAAVRSMQAARAGGNSAGVAGRH.

Residue 120 to 126 (GSNGKTT) coordinates ATP.

It belongs to the MurCDEF family.

It is found in the cytoplasm. It carries out the reaction UDP-N-acetyl-alpha-D-muramoyl-L-alanine + D-glutamate + ATP = UDP-N-acetyl-alpha-D-muramoyl-L-alanyl-D-glutamate + ADP + phosphate + H(+). Its pathway is cell wall biogenesis; peptidoglycan biosynthesis. Cell wall formation. Catalyzes the addition of glutamate to the nucleotide precursor UDP-N-acetylmuramoyl-L-alanine (UMA). The sequence is that of UDP-N-acetylmuramoylalanine--D-glutamate ligase from Nitrosospira multiformis (strain ATCC 25196 / NCIMB 11849 / C 71).